A 101-amino-acid chain; its full sequence is Small ribosomal subunit protein uS14 (101 aa).

This sequence belongs to the universal ribosomal protein uS14 family. Part of the 30S ribosomal subunit. Contacts proteins S3 and S10.

Binds 16S rRNA, required for the assembly of 30S particles and may also be responsible for determining the conformation of the 16S rRNA at the A site. The polypeptide is Small ribosomal subunit protein uS14 (Ruegeria pomeroyi (strain ATCC 700808 / DSM 15171 / DSS-3) (Silicibacter pomeroyi)).